A 314-amino-acid polypeptide reads, in one-letter code: 4-hydroxy-3-methylbut-2-enyl diphosphate reductase (314 aa).

A [4Fe-4S] cluster-binding site is contributed by cysteine 12. (2E)-4-hydroxy-3-methylbut-2-enyl diphosphate is bound by residues histidine 43 and histidine 81. Dimethylallyl diphosphate is bound by residues histidine 43 and histidine 81. The isopentenyl diphosphate site is built by histidine 43 and histidine 81. Cysteine 103 provides a ligand contact to [4Fe-4S] cluster. Histidine 131 lines the (2E)-4-hydroxy-3-methylbut-2-enyl diphosphate pocket. Histidine 131 lines the dimethylallyl diphosphate pocket. Residue histidine 131 participates in isopentenyl diphosphate binding. Glutamate 133 functions as the Proton donor in the catalytic mechanism. Threonine 170 is a (2E)-4-hydroxy-3-methylbut-2-enyl diphosphate binding site. [4Fe-4S] cluster is bound at residue cysteine 198. (2E)-4-hydroxy-3-methylbut-2-enyl diphosphate-binding residues include serine 226, asparagine 228, and serine 271. The dimethylallyl diphosphate site is built by serine 226, asparagine 228, and serine 271. Serine 226, asparagine 228, and serine 271 together coordinate isopentenyl diphosphate.

It belongs to the IspH family. Requires [4Fe-4S] cluster as cofactor.

It carries out the reaction isopentenyl diphosphate + 2 oxidized [2Fe-2S]-[ferredoxin] + H2O = (2E)-4-hydroxy-3-methylbut-2-enyl diphosphate + 2 reduced [2Fe-2S]-[ferredoxin] + 2 H(+). It catalyses the reaction dimethylallyl diphosphate + 2 oxidized [2Fe-2S]-[ferredoxin] + H2O = (2E)-4-hydroxy-3-methylbut-2-enyl diphosphate + 2 reduced [2Fe-2S]-[ferredoxin] + 2 H(+). It participates in isoprenoid biosynthesis; dimethylallyl diphosphate biosynthesis; dimethylallyl diphosphate from (2E)-4-hydroxy-3-methylbutenyl diphosphate: step 1/1. It functions in the pathway isoprenoid biosynthesis; isopentenyl diphosphate biosynthesis via DXP pathway; isopentenyl diphosphate from 1-deoxy-D-xylulose 5-phosphate: step 6/6. Functionally, catalyzes the conversion of 1-hydroxy-2-methyl-2-(E)-butenyl 4-diphosphate (HMBPP) into a mixture of isopentenyl diphosphate (IPP) and dimethylallyl diphosphate (DMAPP). Acts in the terminal step of the DOXP/MEP pathway for isoprenoid precursor biosynthesis. The chain is 4-hydroxy-3-methylbut-2-enyl diphosphate reductase from Bacillus velezensis (strain DSM 23117 / BGSC 10A6 / LMG 26770 / FZB42) (Bacillus amyloliquefaciens subsp. plantarum).